The chain runs to 557 residues: Copine-7 (557 aa).

2 consecutive C2 domains span residues 1-128 (MSGD…TRPL) and 135-263 (NAGK…AQWD). Residues D168, D174, D230, D232, and D238 each contribute to the Ca(2+) site. Positions 306-505 (HCTVAIDFTA…PALRDIVQFV (200 aa)) constitute a VWFA domain.

This sequence belongs to the copine family. It depends on Ca(2+) as a cofactor.

The protein resides in the cytoplasm. Its subcellular location is the nucleus. It localises to the cell membrane. Calcium-dependent phospholipid-binding protein that may play a role in calcium-mediated intracellular processes. This chain is Copine-7, found in Mus musculus (Mouse).